The sequence spans 508 residues: Mevalonate kinase ERG12 (508 aa).

A disordered region spans residues 1-46 (MPPSNPAMVNGLNGSHANGNGNGHNHISDSGSETSGESSNGSGRRR). The segment covering 10-42 (NGLNGSHANGNGNGHNHISDSGSETSGESSNGS) has biased composition (low complexity). Residues K68, S200, and 205–211 (GAGLGSS) contribute to the ATP site. 2 residues coordinate Mg(2+): S211 and E256. D267 (proton acceptor) is an active-site residue.

Belongs to the GHMP kinase family. Mevalonate kinase subfamily. As to quaternary structure, homodimer. Mg(2+) is required as a cofactor.

The protein localises to the cytoplasm. Its subcellular location is the cytosol. The catalysed reaction is (R)-mevalonate + ATP = (R)-5-phosphomevalonate + ADP + H(+). The protein operates within isoprenoid biosynthesis; isopentenyl diphosphate biosynthesis via mevalonate pathway; isopentenyl diphosphate from (R)-mevalonate: step 1/3. Mevalonate kinase; part of the second module of ergosterol biosynthesis pathway that includes the middle steps of the pathway. ERG12 converts mevalonate into 5-phosphomevalonate. The second module is carried out in the vacuole and involves the formation of farnesyl diphosphate, which is also an important intermediate in the biosynthesis of ubiquinone, dolichol, heme and prenylated proteins. Activity by the mevalonate kinase ERG12 (FG05912) first converts mevalonate into 5-phosphomevalonate. 5-phosphomevalonate is then further converted to 5-diphosphomevalonate by the phosphomevalonate kinase ERG8 (FG09764). The diphosphomevalonate decarboxylase ERG19 (FG10424) then produces isopentenyl diphosphate. The isopentenyl-diphosphate delta-isomerase IDI1 (FG09722) then catalyzes the 1,3-allylic rearrangement of the homoallylic substrate isopentenyl (IPP) to its highly electrophilic allylic isomer, dimethylallyl diphosphate (DMAPP). Finally the farnesyl diphosphate synthase ERG20 (FG06784) catalyzes the sequential condensation of isopentenyl pyrophosphate with dimethylallyl pyrophosphate, and then with the resultant geranylpyrophosphate to the ultimate product farnesyl pyrophosphate. This Gibberella zeae (strain ATCC MYA-4620 / CBS 123657 / FGSC 9075 / NRRL 31084 / PH-1) (Wheat head blight fungus) protein is Mevalonate kinase ERG12.